A 685-amino-acid chain; its full sequence is Exocyst complex component 8 (685 aa).

The PH domain maps to 151–251 (YLVYNGDLTE…WLEILEQTKK (101 aa)). Residues 254-263 (ALNEKQKQEE) are compositionally biased toward basic and acidic residues. The tract at residues 254 to 273 (ALNEKQKQEETTPQLPVVPE) is disordered.

It belongs to the EXO84 family. As to quaternary structure, the exocyst complex is composed of exoc1, exoc2, exoc3, exoc4, exoc5, exoc6, exoc7 and exoc8.

The protein localises to the cytoplasm. The protein resides in the perinuclear region. Its subcellular location is the cell projection. It localises to the growth cone. Component of the exocyst complex involved in the docking of exocytic vesicles with fusion sites on the plasma membrane. This Xenopus laevis (African clawed frog) protein is Exocyst complex component 8 (exoc8).